A 292-amino-acid polypeptide reads, in one-letter code: Elongation factor Ts (292 aa).

Positions 79–82 are involved in Mg(2+) ion dislocation from EF-Tu; sequence TDFV.

This sequence belongs to the EF-Ts family.

Its subcellular location is the cytoplasm. Functionally, associates with the EF-Tu.GDP complex and induces the exchange of GDP to GTP. It remains bound to the aminoacyl-tRNA.EF-Tu.GTP complex up to the GTP hydrolysis stage on the ribosome. This Idiomarina loihiensis (strain ATCC BAA-735 / DSM 15497 / L2-TR) protein is Elongation factor Ts (tsf).